A 428-amino-acid polypeptide reads, in one-letter code: MQILPIFFPLLITSLHAIPRGRRAVRNRNEGDINSLVGVGQYLYQGDIAVVKSRARRAVIRQKHKKWKLPMPYSFDRNFPSRSRQRVLEAMQFWSEKTCVTFHENRYVYPHVSIFEGNGCWSFVGKQPSLREQSLSLERSCTDHTFVVAHEIAHTLGFYHEHARGDRDQFISIDYSNVNPNLTFAFAKESEKQLDHQEAAYEYGSVMHYSVDQFAVNTNRPVIYARDQKFAQAMGNRMRATFQDVSRMNVLYNCHERCANTLNRCQQGGYPAPSDCSQCVCPDGFGGNFCETIEAHSVGQKDNSDCGGVLWASETSQTFYGAVRTRVHSNSVLPTPEHCFWHIRASQGKSIEIQIKNIISPCSMSCSFNALELKLSNFTMTGPRFCCDEHIYNRYSQPKVFQSEGPLAVIGAYARYDYLDFNIEYRAV.

A signal peptide spans 1-17 (MQILPIFFPLLITSLHA). A propeptide spanning residues 18 to 57 (IPRGRRAVRNRNEGDINSLVGVGQYLYQGDIAVVKSRARR) is cleaved from the precursor. The region spanning 58–255 (AVIRQKHKKW…SRMNVLYNCH (198 aa)) is the Peptidase M12A domain. 6 disulfide bridges follow: Cys99–Cys254, Cys120–Cys141, Cys258–Cys276, Cys281–Cys290, Cys306–Cys339, and Cys366–Cys386. Zn(2+) is bound at residue His150. The active site involves Glu151. Residues His154 and His160 each contribute to the Zn(2+) site. Asn181 carries an N-linked (GlcNAc...) asparagine glycan. The 42-residue stretch at 250 to 291 (VLYNCHERCANTLNRCQQGGYPAPSDCSQCVCPDGFGGNFCE) folds into the EGF-like domain. The region spanning 306 to 428 (CGGVLWASET…LDFNIEYRAV (123 aa)) is the CUB domain. An N-linked (GlcNAc...) asparagine glycan is attached at Asn377.

Zn(2+) serves as cofactor.

It localises to the secreted. Functionally, metalloprotease. The protein is Zinc metalloproteinase nas-27 (nas-27) of Caenorhabditis elegans.